The sequence spans 259 residues: GDP-perosamine N-formyltransferase (259 aa).

Residues 89–91 (SLI) and 139–143 (DENFD) contribute to the (6S)-5,6,7,8-tetrahydrofolate site.

It belongs to the Fmt family. As to quaternary structure, homodimer.

The enzyme catalyses GDP-alpha-D-perosamine + (6R)-10-formyltetrahydrofolate = GDP-N-formyl-alpha-D-perosamine + (6S)-5,6,7,8-tetrahydrofolate + H(+). Its pathway is bacterial outer membrane biogenesis; lipopolysaccharide biosynthesis. Involved in the lipopolysaccharide (LPS) O-antigen biosynthesis. Catalyzes the transfer of a formyl group to GDP-perosamine, leading to the formation of GDP-N-formylperosamine. Is critical for full bacterial virulence. The polypeptide is GDP-perosamine N-formyltransferase (Brucella abortus (strain 2308)).